We begin with the raw amino-acid sequence, 270 residues long: Nodule lectin (270 aa).

Positions 1-33 (MAFYRTNLPTRELFSLVSVVIVLLATNINSVQA) are cleaved as a signal peptide. A propeptide spanning residues 34-41 (LSFNFTKL) is cleaved from the precursor. N134 carries N-linked (GlcNAc...) asparagine glycosylation.

It belongs to the leguminous lectin family. Glycosylated in a boron-dependent manner. Glycosylation is required for localization to symbiosomes. 3 different glycosylation variants, NLEC-1A, NLEC-1B and NLEC-1C, have been identified. Expressed in nodules of Rhizobium-infected and uninfected roots and in the root stele near the nodule attachment point. In roots which have been colonized by the endomycorrhizal fungus G.versiforme, detected only in cortical cells colonized by the fungus, mainly those containing arbuscules.

The protein localises to the symbiosome. It localises to the peribacteroid space. Its subcellular location is the peribacteroid membrane. Involved in symbiosome development. The sequence is that of Nodule lectin (NLEC1) from Pisum sativum (Garden pea).